A 189-amino-acid chain; its full sequence is Haloacid dehalogenase-like hydrolase domain-containing protein 3 (189 aa).

It belongs to the HAD-like hydrolase superfamily.

In Xenopus tropicalis (Western clawed frog), this protein is Haloacid dehalogenase-like hydrolase domain-containing protein 3 (hdhd3).